A 364-amino-acid chain; its full sequence is Probable dual-specificity RNA methyltransferase RlmN (364 aa).

Glutamate 106 functions as the Proton acceptor in the catalytic mechanism. Positions 112 to 350 constitute a Radical SAM core domain; sequence YPRRNTVCIS…SCTVRDTRGR (239 aa). Cysteines 119 and 356 form a disulfide. Positions 126, 130, and 133 each coordinate [4Fe-4S] cluster. S-adenosyl-L-methionine contacts are provided by residues 177–178, serine 211, 234–236, and asparagine 313; these read GE and SLH. Cysteine 356 (S-methylcysteine intermediate) is an active-site residue.

Belongs to the radical SAM superfamily. RlmN family. [4Fe-4S] cluster serves as cofactor.

The protein localises to the cytoplasm. It catalyses the reaction adenosine(2503) in 23S rRNA + 2 reduced [2Fe-2S]-[ferredoxin] + 2 S-adenosyl-L-methionine = 2-methyladenosine(2503) in 23S rRNA + 5'-deoxyadenosine + L-methionine + 2 oxidized [2Fe-2S]-[ferredoxin] + S-adenosyl-L-homocysteine. The enzyme catalyses adenosine(37) in tRNA + 2 reduced [2Fe-2S]-[ferredoxin] + 2 S-adenosyl-L-methionine = 2-methyladenosine(37) in tRNA + 5'-deoxyadenosine + L-methionine + 2 oxidized [2Fe-2S]-[ferredoxin] + S-adenosyl-L-homocysteine. Specifically methylates position 2 of adenine 2503 in 23S rRNA and position 2 of adenine 37 in tRNAs. The sequence is that of Probable dual-specificity RNA methyltransferase RlmN from Mycobacterium bovis (strain ATCC BAA-935 / AF2122/97).